The sequence spans 369 residues: Glutamate 5-kinase (369 aa).

Lys-9 is a binding site for ATP. Ser-49, Asp-136, and Asn-148 together coordinate substrate. ATP-binding positions include 168–169 and 210–216; these read TD and TGGMLTK. A PUA domain is found at 275 to 355; it reads QGEIYVDQGA…KGVVIHRDDW (81 aa).

It belongs to the glutamate 5-kinase family.

The protein localises to the cytoplasm. The enzyme catalyses L-glutamate + ATP = L-glutamyl 5-phosphate + ADP. It functions in the pathway amino-acid biosynthesis; L-proline biosynthesis; L-glutamate 5-semialdehyde from L-glutamate: step 1/2. Functionally, catalyzes the transfer of a phosphate group to glutamate to form L-glutamate 5-phosphate. This Streptococcus sanguinis (strain SK36) protein is Glutamate 5-kinase.